Here is a 333-residue protein sequence, read N- to C-terminus: Ig gamma-2B chain C region (333 aa).

Ig-like domains lie at 6–96 (PSVY…KKVE), 124–223 (PSVF…KTIS), and 232–328 (PQVY…KSIS). Intrachain disulfides connect C27-C80, C147-C207, and C253-C311.

In Rattus norvegicus (Rat), this protein is Ig gamma-2B chain C region (Igh-1a).